Consider the following 354-residue polypeptide: Putative Xaa-Pro aminopeptidase (354 aa).

The Mn(2+) site is built by D213, D224, H290, E319, and E333.

The protein belongs to the peptidase M24B family. The cofactor is Mn(2+).

It catalyses the reaction Release of any N-terminal amino acid, including proline, that is linked to proline, even from a dipeptide or tripeptide.. The chain is Putative Xaa-Pro aminopeptidase (pepP) from Mycoplasma genitalium (strain ATCC 33530 / DSM 19775 / NCTC 10195 / G37) (Mycoplasmoides genitalium).